The sequence spans 145 residues: Ornithine decarboxylase antizyme (145 aa).

Belongs to the ODC antizyme family. Interacts with ODC1 and thereby sterically blocks ODC homodimerization.

In terms of biological role, ornithine decarboxylase (ODC) antizyme protein that negatively regulates ODC activity and intracellular polyamine biosynthesis and uptake in response to increased intracellular polyamine levels. Binds to ODC monomers, inhibiting the assembly of the functional ODC homodimer, and targets the monomers for ubiquitin-independent proteolytic destruction by the 26S proteasome. In Onchocerca volvulus, this protein is Ornithine decarboxylase antizyme.